We begin with the raw amino-acid sequence, 325 residues long: Lipoyl synthase (325 aa).

The tract at residues 1-24 is disordered; the sequence is MPIAPDRVRHPEKANRPDNPIQRK. Residues C54, C59, C65, C80, C84, C87, and S293 each coordinate [4Fe-4S] cluster. A Radical SAM core domain is found at 66–282; that stretch reads WKKKHATFMI…VTVGRGKGFL (217 aa).

It belongs to the radical SAM superfamily. Lipoyl synthase family. [4Fe-4S] cluster is required as a cofactor.

The protein localises to the cytoplasm. It catalyses the reaction [[Fe-S] cluster scaffold protein carrying a second [4Fe-4S](2+) cluster] + N(6)-octanoyl-L-lysyl-[protein] + 2 oxidized [2Fe-2S]-[ferredoxin] + 2 S-adenosyl-L-methionine + 4 H(+) = [[Fe-S] cluster scaffold protein] + N(6)-[(R)-dihydrolipoyl]-L-lysyl-[protein] + 4 Fe(3+) + 2 hydrogen sulfide + 2 5'-deoxyadenosine + 2 L-methionine + 2 reduced [2Fe-2S]-[ferredoxin]. It functions in the pathway protein modification; protein lipoylation via endogenous pathway; protein N(6)-(lipoyl)lysine from octanoyl-[acyl-carrier-protein]: step 2/2. Functionally, catalyzes the radical-mediated insertion of two sulfur atoms into the C-6 and C-8 positions of the octanoyl moiety bound to the lipoyl domains of lipoate-dependent enzymes, thereby converting the octanoylated domains into lipoylated derivatives. The chain is Lipoyl synthase from Rhodospirillum centenum (strain ATCC 51521 / SW).